The sequence spans 143 residues: Nucleoside diphosphate kinase (143 aa).

6 residues coordinate ATP: Lys-11, Phe-59, Arg-87, Thr-93, Arg-104, and Asn-114. His-117 (pros-phosphohistidine intermediate) is an active-site residue.

Belongs to the NDK family. In terms of assembly, homotetramer. Mg(2+) serves as cofactor.

The protein resides in the cytoplasm. The catalysed reaction is a 2'-deoxyribonucleoside 5'-diphosphate + ATP = a 2'-deoxyribonucleoside 5'-triphosphate + ADP. The enzyme catalyses a ribonucleoside 5'-diphosphate + ATP = a ribonucleoside 5'-triphosphate + ADP. Major role in the synthesis of nucleoside triphosphates other than ATP. The ATP gamma phosphate is transferred to the NDP beta phosphate via a ping-pong mechanism, using a phosphorylated active-site intermediate. In Acinetobacter baylyi (strain ATCC 33305 / BD413 / ADP1), this protein is Nucleoside diphosphate kinase.